The chain runs to 241 residues: MATVSMRDMLKAGVHFGHQTRYWNPKMKPFIFGARNKVHIINLEKTVPMFNEALAELNKIVSRKGKILFVGTKRAASEAVKDAALSCDQFFVNHRWLGGMLTNWKTVRQSIKRLKDLETQSQDGTFDKLTKKEALMRTRELEKLENSLGGIKDMGGLPDALFVIDADHEHIAIKEANNLGIPVFAIVDTNSDPDGVDFVIPGNDDAIRAVTLYLGAVAATVREGRSQDLASQAEESFVEAE.

It belongs to the universal ribosomal protein uS2 family.

This is Small ribosomal subunit protein uS2 from Shigella flexneri serotype 5b (strain 8401).